A 376-amino-acid polypeptide reads, in one-letter code: Palmitoyl-[acyl-carrier-protein] 4-desaturase 2, chloroplastic (376 aa).

A chloroplast-targeting transit peptide spans 1 to 33 (MELHLALRASPLPAADPGRRPPPPRGNFATNCT). Fe cation-binding residues include Glu114, Glu149, His152, Glu202, Glu235, and His238.

The protein belongs to the fatty acid desaturase type 2 family. In terms of assembly, homodimer. Requires Fe(2+) as cofactor. Preferentially expressed in the flower labellum.

It localises to the plastid. It is found in the chloroplast stroma. The catalysed reaction is hexadecanoyl-[ACP] + 2 reduced [2Fe-2S]-[ferredoxin] + O2 + 2 H(+) = (4Z)-hexadecenoyl-[ACP] + 2 oxidized [2Fe-2S]-[ferredoxin] + 2 H2O. It carries out the reaction octadecanoyl-[ACP] + 2 reduced [2Fe-2S]-[ferredoxin] + O2 + 2 H(+) = (9Z)-octadecenoyl-[ACP] + 2 oxidized [2Fe-2S]-[ferredoxin] + 2 H2O. The protein operates within lipid metabolism; fatty acid metabolism. Its function is as follows. Converts stearoyl-ACP to oleoyl-ACP by introduction of a cis double bond between carbons 9 and 10 of the acyl chain. Converts palmitoyl-ACP to (4Z)-hexadec-4-enoyl-ACP by introduction of a cis double bond between carbons 4 and 5 of the acyl chain. Catalyzes the desaturation of saturated fatty acid 18:0 and 16:0 to generate 18:1 (delta-9) and 16:1 (delta-4) intermediates, expected to give rise to 9-alkenes and 12-alkenes, respectively. The sequence is that of Palmitoyl-[acyl-carrier-protein] 4-desaturase 2, chloroplastic (SAD2) from Ophrys arachnitiformis subsp. archipelagi (Orchid).